Consider the following 27-residue polypeptide: Conotoxin (27 aa).

Cystine bridges form between cysteine 2–cysteine 16, cysteine 6–cysteine 18, and cysteine 12–cysteine 23. Asparagine 27 bears the Asparagine amide mark.

In terms of tissue distribution, expressed by the venom duct.

The protein resides in the secreted. Functionally, probable neurotoxin that inhibits ion channels. This is Conotoxin from Conus amadis (Amadis cone).